Here is a 331-residue protein sequence, read N- to C-terminus: Aldo-keto reductase family 7 member A3 (331 aa).

Ser-6 carries the post-translational modification Phosphoserine. The NADPH site is built by Met-17, Asp-44, and Tyr-49. The active-site Proton donor is the Tyr-49. Phosphoserine is present on Ser-85. NADPH contacts are provided by His-113, Ser-143, Asn-144, Asn-198, Leu-200, Gly-202, Lys-208, Tyr-209, and Arg-222. Thr-227 is subject to Phosphothreonine. The NADPH site is built by Ser-290, Gln-294, and Asn-298.

The protein belongs to the aldo/keto reductase family. Aldo/keto reductase 2 subfamily. Homodimer. Expressed in colon, kidney, liver, pancreas, adenocarcinoma and endometrium.

The protein localises to the cytoplasm. It carries out the reaction a primary alcohol + NADP(+) = an aldehyde + NADPH + H(+). It catalyses the reaction aflatoxin B1 dialdehyde + NADPH + H(+) = aflatoxin B1 C(6a)-monoaldehyde + NADP(+). The catalysed reaction is aflatoxin B1 dialdehyde + NADPH + H(+) = aflatoxin B1 C(8)-monoaldehyde + NADP(+). The enzyme catalyses aflatoxin B1 C(6a)-monoaldehyde + NADPH + 2 H(+) = aflatoxin B1 triol + NADP(+). Inhibited by citrate. Functionally, catalyzes the NADPH-dependent reduction of various carbonyl-containing compounds, including aldehydes, ketones, and toxic products from cellular metabolism or environmental exposure. Can reduce the dialdehyde form of aflatoxin B1 (AFB1) into alcohol derivatives, via monoaldehydes intermediates. Can reduce the dialdehyde form of aflatoxin B1 (AFB1) into alcohol derivatives, via monoaldehydes intermediates, thus preventing the formation of protein adducts that contribute to AFB1-induced toxicity. The sequence is that of Aldo-keto reductase family 7 member A3 from Homo sapiens (Human).